We begin with the raw amino-acid sequence, 480 residues long: GTPase Der (480 aa).

2 EngA-type G domains span residues 5–170 (PVVA…PSQE) and 178–351 (LKLA…QSSM). Residues 11-18 (GRPNVGKS), 58-62 (DTGGI), 123-126 (NKVD), 184-191 (GRPNVGKS), 231-235 (DTAGV), and 296-299 (NKWD) contribute to the GTP site. The KH-like domain maps to 352–436 (FEVSTNRLTQ…PLNVVFKLNE (85 aa)). A compositionally biased stretch (polar residues) spans 438-454 (PYANKSDTPTKAKTQQL). The disordered stretch occupies residues 438–480 (PYANKSDTPTKAKTQQLRQRERNRAQKFTTKDKPRFTNKDKKR). The segment covering 455–480 (RQRERNRAQKFTTKDKPRFTNKDKKR) has biased composition (basic and acidic residues).

This sequence belongs to the TRAFAC class TrmE-Era-EngA-EngB-Septin-like GTPase superfamily. EngA (Der) GTPase family. As to quaternary structure, associates with the 50S ribosomal subunit.

GTPase that plays an essential role in the late steps of ribosome biogenesis. The sequence is that of GTPase Der from Psychrobacter cryohalolentis (strain ATCC BAA-1226 / DSM 17306 / VKM B-2378 / K5).